A 590-amino-acid polypeptide reads, in one-letter code: Type I inositol polyphosphate 5-phosphatase 1 (590 aa).

A disordered region spans residues 47–73 (DYSADSDDDYEDRSQEFDPISSGVTNP). The span at 48–57 (YSADSDDDYE) shows a compositional bias: acidic residues. Serine 60 carries the post-translational modification Phosphoserine. Catalytic stretches follow at residues 445 to 460 (ERII…INLS) and 523 to 538 (GKRR…WNGK).

Belongs to the inositol polyphosphate 5-phosphatase family. In terms of tissue distribution, expressed ubiquitously.

The catalysed reaction is 1D-myo-inositol 1,4,5-trisphosphate + H2O = 1D-myo-inositol 1,4-bisphosphate + phosphate. It carries out the reaction 1D-myo-inositol 1,3,4,5-tetrakisphosphate + H2O = 1D-myo-inositol 1,3,4-trisphosphate + phosphate. Its function is as follows. Has phosphatase activity toward Ins(1,4,5)P3 and Ins(1,3,4,5)P4, but not toward Ins(1,4)P2, Ins(1)P. Seems to be involved in the abscisic acid (ABA) signaling pathway. Could also be able to hydrolyze PtdIns(4,5)P2 and PtdIns(3,4,5)P3. The polypeptide is Type I inositol polyphosphate 5-phosphatase 1 (Arabidopsis thaliana (Mouse-ear cress)).